Here is a 413-residue protein sequence, read N- to C-terminus: Metacaspase-1A (413 aa).

Residues 1-104 are disordered; that stretch reads MQNHHHQQSS…PTDPVAFGHG (104 aa). Pro residues predominate over residues 36–47; the sequence is SPQPGYGAPPPH. Over residues 49 to 58 the composition is skewed to low complexity; sequence GYGQPPSGYG. Positions 75–85 are enriched in polar residues; the sequence is GMNQYQNTYSH. Catalysis depends on residues histidine 204 and cysteine 260.

The protein belongs to the peptidase C14B family.

In terms of biological role, involved in cell death (apoptosis). Required for the apoptotic-like loss of membrane phospholipid asymmetry at stationary phase and facilitates growth under conditions of endoplasmic reticulum stress. This chain is Metacaspase-1A (casA), found in Aspergillus fumigatus (strain CBS 144.89 / FGSC A1163 / CEA10) (Neosartorya fumigata).